Consider the following 419-residue polypeptide: Transcription termination factor Rho (419 aa).

In terms of domain architecture, Rho RNA-BD spans 48-123 (DIFGDGVLEI…LKVNAVNYDK (76 aa)). RNA-binding regions lie at residues 61 to 66 (GFGFLR), 78 to 80 (DIY), and 108 to 110 (ERY). ATP-binding positions include 169 to 174 (GRGQRG), 181 to 186 (KAGKTI), and R212. Residues 284–288 (VLTGG) are RNA-binding 2.

Belongs to the Rho family. Homohexamer. The homohexamer assembles into an open ring structure.

In terms of biological role, facilitates transcription termination by a mechanism that involves Rho binding to the nascent RNA, activation of Rho's RNA-dependent ATPase activity, and release of the mRNA from the DNA template. The polypeptide is Transcription termination factor Rho (Buchnera aphidicola subsp. Schizaphis graminum (strain Sg)).